Reading from the N-terminus, the 631-residue chain is MDYDYEKLGLKVGLEIHQQLNTKRKLFCNCPTKIRDDEPHGEIERVLRPSQSEMGHVDKAALLESKKEKKFIYQYYNDTTCLVELDDEPPHDVAPDAVDTALEVSTLMNMKMADEVQIMRKMVIDGSNTSGFQRTMFVSQEGFIETEYGNIGVTSLCLEEDACKKIEDGKDYTKYCVDRLGIPLLEITTEPDITSPKMGKEAARRIGTILRATGKVKRGLGTIRQDVNISIRNGARIEVKGVQNLDLIEKIIENEVTRQISLNEIKEELLKRNAEVVDEIKDITELLKDTESKVLKSALKNKGVIRAILLKGFSGMIGREVQPGRRLGTEFSDRGKVLGGVGGLFHTDELPKYGITEEEVTKLKEYMNCGENDAVILVADKKNKVERALNAVIERAKESMIGIPEETRKALDDGNTSYLRPLPGAARMYPETDVPTITITEEKLEAIRNNLPEMPEEKLVRFVKEYELNEDLAKQMVMSYHVDLFESLSKKYSKIKPTLIATTLEATLKEIKREGLDTDLLTEEHLEEVFKGLSEDKMSKEAVPEVIKGFIENPTKKLDEILEIKGMTSMSVEEVESIIEDIINQNIATVNEKGMGAMGLLMGRCMAQLRGKADGKIINTTLQKKLKEKVQ.

This sequence belongs to the GatB/GatE family. GatE subfamily. As to quaternary structure, heterodimer of GatD and GatE.

It carries out the reaction L-glutamyl-tRNA(Gln) + L-glutamine + ATP + H2O = L-glutaminyl-tRNA(Gln) + L-glutamate + ADP + phosphate + H(+). Allows the formation of correctly charged Gln-tRNA(Gln) through the transamidation of misacylated Glu-tRNA(Gln) in organisms which lack glutaminyl-tRNA synthetase. The reaction takes place in the presence of glutamine and ATP through an activated gamma-phospho-Glu-tRNA(Gln). The GatDE system is specific for glutamate and does not act on aspartate. The sequence is that of Glutamyl-tRNA(Gln) amidotransferase subunit E from Methanococcus maripaludis (strain C6 / ATCC BAA-1332).